The following is a 238-amino-acid chain: Uridylate kinase (238 aa).

12 to 15 is a binding site for ATP; it reads KLSG. Residue Gly-54 participates in UMP binding. ATP is bound by residues Gly-55 and Arg-59. UMP-binding positions include Asp-74 and 135-142; that span reads TGNPFFTT. Thr-162, Tyr-168, and Asp-171 together coordinate ATP.

This sequence belongs to the UMP kinase family. Homohexamer.

The protein resides in the cytoplasm. The enzyme catalyses UMP + ATP = UDP + ADP. It participates in pyrimidine metabolism; CTP biosynthesis via de novo pathway; UDP from UMP (UMPK route): step 1/1. With respect to regulation, inhibited by UTP. Functionally, catalyzes the reversible phosphorylation of UMP to UDP. In Dechloromonas aromatica (strain RCB), this protein is Uridylate kinase.